We begin with the raw amino-acid sequence, 218 residues long: Peptide methionine sulfoxide reductase MsrA (218 aa).

Cysteine 57 is an active-site residue.

It belongs to the MsrA Met sulfoxide reductase family.

It catalyses the reaction L-methionyl-[protein] + [thioredoxin]-disulfide + H2O = L-methionyl-(S)-S-oxide-[protein] + [thioredoxin]-dithiol. It carries out the reaction [thioredoxin]-disulfide + L-methionine + H2O = L-methionine (S)-S-oxide + [thioredoxin]-dithiol. Has an important function as a repair enzyme for proteins that have been inactivated by oxidation. Catalyzes the reversible oxidation-reduction of methionine sulfoxide in proteins to methionine. This chain is Peptide methionine sulfoxide reductase MsrA, found in Brucella melitensis biotype 2 (strain ATCC 23457).